A 95-amino-acid chain; its full sequence is Aspartyl/glutamyl-tRNA(Asn/Gln) amidotransferase subunit C (95 aa).

The disordered stretch occupies residues 74-95 (GQALEPAPDADNEHFLVPQVVE).

Belongs to the GatC family. Heterotrimer of A, B and C subunits.

It catalyses the reaction L-glutamyl-tRNA(Gln) + L-glutamine + ATP + H2O = L-glutaminyl-tRNA(Gln) + L-glutamate + ADP + phosphate + H(+). The enzyme catalyses L-aspartyl-tRNA(Asn) + L-glutamine + ATP + H2O = L-asparaginyl-tRNA(Asn) + L-glutamate + ADP + phosphate + 2 H(+). Allows the formation of correctly charged Asn-tRNA(Asn) or Gln-tRNA(Gln) through the transamidation of misacylated Asp-tRNA(Asn) or Glu-tRNA(Gln) in organisms which lack either or both of asparaginyl-tRNA or glutaminyl-tRNA synthetases. The reaction takes place in the presence of glutamine and ATP through an activated phospho-Asp-tRNA(Asn) or phospho-Glu-tRNA(Gln). This chain is Aspartyl/glutamyl-tRNA(Asn/Gln) amidotransferase subunit C, found in Salinibacter ruber (strain DSM 13855 / M31).